A 233-amino-acid polypeptide reads, in one-letter code: Small ribosomal subunit protein uS3 (233 aa).

The 69-residue stretch at 39-107 folds into the KH type-2 domain; that stretch reads VRQYLKKELA…PAQINISEVR (69 aa).

The protein belongs to the universal ribosomal protein uS3 family. In terms of assembly, part of the 30S ribosomal subunit. Forms a tight complex with proteins S10 and S14.

Its function is as follows. Binds the lower part of the 30S subunit head. Binds mRNA in the 70S ribosome, positioning it for translation. In Photorhabdus laumondii subsp. laumondii (strain DSM 15139 / CIP 105565 / TT01) (Photorhabdus luminescens subsp. laumondii), this protein is Small ribosomal subunit protein uS3.